Here is a 362-residue protein sequence, read N- to C-terminus: Chorismate synthase (362 aa).

Arg-48 serves as a coordination point for NADP(+). FMN contacts are provided by residues 131–133 (RAS), 243–244 (NA), Gly-288, 303–307 (KPTSS), and Arg-329.

This sequence belongs to the chorismate synthase family. As to quaternary structure, homotetramer. FMNH2 serves as cofactor.

The catalysed reaction is 5-O-(1-carboxyvinyl)-3-phosphoshikimate = chorismate + phosphate. It participates in metabolic intermediate biosynthesis; chorismate biosynthesis; chorismate from D-erythrose 4-phosphate and phosphoenolpyruvate: step 7/7. Functionally, catalyzes the anti-1,4-elimination of the C-3 phosphate and the C-6 proR hydrogen from 5-enolpyruvylshikimate-3-phosphate (EPSP) to yield chorismate, which is the branch point compound that serves as the starting substrate for the three terminal pathways of aromatic amino acid biosynthesis. This reaction introduces a second double bond into the aromatic ring system. This chain is Chorismate synthase, found in Bartonella tribocorum (strain CIP 105476 / IBS 506).